The sequence spans 187 residues: Elongation factor P (187 aa).

Belongs to the elongation factor P family.

The protein localises to the cytoplasm. The protein operates within protein biosynthesis; polypeptide chain elongation. In terms of biological role, involved in peptide bond synthesis. Stimulates efficient translation and peptide-bond synthesis on native or reconstituted 70S ribosomes in vitro. Probably functions indirectly by altering the affinity of the ribosome for aminoacyl-tRNA, thus increasing their reactivity as acceptors for peptidyl transferase. In Desulforapulum autotrophicum (strain ATCC 43914 / DSM 3382 / VKM B-1955 / HRM2) (Desulfobacterium autotrophicum), this protein is Elongation factor P.